A 796-amino-acid polypeptide reads, in one-letter code: Histone acetyltransferase KAT2B (796 aa).

Disordered stretches follow at residues 1–32 (MSES…TECS), 77–97 (WKSQ…AEQP), and 371–408 (AGGG…DSKR). Positions 10–24 (GSPAVGAAGSAPAAP) are enriched in low complexity. A compositionally biased stretch (pro residues) spans 81-94 (NPPPTPPPPTPPRA). Basic and acidic residues predominate over residues 392 to 408 (GEKRKPAEPLSHEDSKR). Residues 469–617 (LNQKPNKKIL…GATLMGCELN (149 aa)) form the N-acetyltransferase domain. Catalysis depends on glutamate 536, which acts as the Proton donor/acceptor. Residues 540-542 (CAV), 547-553 (QVKGYGT), and 578-581 (YAIG) each bind acetyl-CoA. One can recognise a Bromo domain in the interval 687–791 (KDPDQLYSTL…KFFYTKIKEA (105 aa)).

Belongs to the acetyltransferase family. GCN5 subfamily.

The protein localises to the nucleus. Its subcellular location is the cytoplasm. It localises to the cytoskeleton. The protein resides in the microtubule organizing center. It is found in the centrosome. The catalysed reaction is L-lysyl-[histone] + acetyl-CoA = N(6)-acetyl-L-lysyl-[histone] + CoA + H(+). It catalyses the reaction L-lysyl-[protein] + acetyl-CoA = N(6)-acetyl-L-lysyl-[protein] + CoA + H(+). The enzyme catalyses spermidine + acetyl-CoA = N(8)-acetylspermidine + CoA + H(+). Functionally, functions as a histone acetyltransferase (HAT) to promote transcriptional activation. Has significant histone acetyltransferase activity with core histones (H3 and H4), and also with nucleosome core particles. Has a a strong preference for acetylation of H3 at 'Lys-9' (H3K9ac). Also acetylates non-histone proteins. Involved in heart and limb development by mediating acetylation of tbx5. Also acetylates spermidine. Together with kat2a, required for growth and differentiation of craniofacial cartilage and bone by regulating acetylation of histone H3 at 'Lys-9' (H3K9ac). The protein is Histone acetyltransferase KAT2B of Danio rerio (Zebrafish).